A 161-amino-acid polypeptide reads, in one-letter code: uncharacterized protein (161 aa).

This sequence to M.thermoautotrophicum MTH862.

This is an uncharacterized protein from Methanocaldococcus jannaschii (strain ATCC 43067 / DSM 2661 / JAL-1 / JCM 10045 / NBRC 100440) (Methanococcus jannaschii).